The sequence spans 163 residues: Sorting nexin-3 (163 aa).

The disordered stretch occupies residues 1 to 20 (MASDQDNSGLDAPGSQFHRP). Residues 42-159 (NFLEIEVRNP…AAFVQDPNWD (118 aa)) form the PX domain. Arg-85, Ser-87, Lys-111, Arg-116, and Arg-125 together coordinate a 1,2-diacyl-sn-glycero-3-phospho-(1D-myo-inositol-3-phosphate).

Belongs to the sorting nexin family.

It is found in the cytoplasm. The protein localises to the golgi apparatus membrane. Its subcellular location is the prevacuolar compartment membrane. Functionally, required for retention of late Golgi membrane proteins. Component of the retrieval machinery that functions by direct interaction with the cytosolic tails of certain TGN membrane proteins during the sorting/budding process at the prevacuolar compartment. Binds phosphatidylinositol 3-phosphate (PtdIns(P3)). This is Sorting nexin-3 (SNX3) from Gibberella zeae (strain ATCC MYA-4620 / CBS 123657 / FGSC 9075 / NRRL 31084 / PH-1) (Wheat head blight fungus).